A 276-amino-acid chain; its full sequence is Rhomboid protease GlpG (276 aa).

6 consecutive transmembrane segments (helical) span residues 94–114 (GPVTWVMMIACVVVFIAMQIL), 142–162 (ALMHFSLMHILFNLLWWWYLG), 169–189 (LGSGKLIVITLISALLSGYVQ), 192–212 (FSGPWFGGLSGVVYALMGYVW), 229–249 (LIIFALIWIVAGWFDLFGMSM), and 250–270 (ANGAHIAGLAVGLAMAFVDSL). The active-site Nucleophile is the serine 201. Histidine 254 is a catalytic residue.

This sequence belongs to the peptidase S54 family.

It localises to the cell inner membrane. It carries out the reaction Cleaves type-1 transmembrane domains using a catalytic dyad composed of serine and histidine that are contributed by different transmembrane domains.. Its function is as follows. Rhomboid-type serine protease that catalyzes intramembrane proteolysis. The sequence is that of Rhomboid protease GlpG from Escherichia coli O45:K1 (strain S88 / ExPEC).